A 311-amino-acid chain; its full sequence is Asialoglycoprotein receptor 2 (311 aa).

The interval 1–44 (MAKDFQDIQQLSSEENDHPFHQGEGPGTRRLNPRRGNPFLKGPP) is disordered. The Cytoplasmic segment spans residues 1–58 (MAKDFQDIQQLSSEENDHPFHQGEGPGTRRLNPRRGNPFLKGPPPAQPLAQRLCSMVC). The Endocytosis signal signature appears at 5–8 (FQDI). At Ser-13 the chain carries Phosphoserine. Residue Cys-54 is the site of S-palmitoyl cysteine attachment. A helical; Signal-anchor for type II membrane protein membrane pass occupies residues 59 to 79 (FSLLALSFNILLLVVICVTGS). Over 80 to 311 (QSEGHGGAQL…KRRNATGEVA (232 aa)) the chain is Extracellular. N-linked (GlcNAc...) asparagine glycosylation is found at Asn-102 and Asn-170. The region spanning 176 to 302 (CCPVNWVEHQ…LQVYRWVCEK (127 aa)) is the C-type lectin domain. Disulfide bonds link Cys-177–Cys-188, Cys-205–Cys-300, and Cys-278–Cys-292. The N-linked (GlcNAc...) asparagine glycan is linked to Asn-305.

In terms of assembly, the functioning ligand-binding unit of this receptor is thought to be at least a dimer. Interacts with LASS2. As to quaternary structure, (Microbial infection) Interacts with hepatitis E virus capsid protein ORF2. As to expression, expressed exclusively in hepatic parenchymal cells.

The protein localises to the membrane. Functionally, mediates the endocytosis of plasma glycoproteins to which the terminal sialic acid residue on their complex carbohydrate moieties has been removed. The receptor recognizes terminal galactose and N-acetylgalactosamine units. After ligand binding to the receptor, the resulting complex is internalized and transported to a sorting organelle, where receptor and ligand are disassociated. The receptor then returns to the cell membrane surface. The chain is Asialoglycoprotein receptor 2 (ASGR2) from Homo sapiens (Human).